Reading from the N-terminus, the 1042-residue chain is Aldehyde reductase lnaA (1042 aa).

An adenylation (A) domain region spans residues 29–425; that stretch reads HAFLNPSAMA…GRRDHQVKVR (397 aa). Positions 532 to 609 constitute a Carrier domain; that stretch reads DNEDSTRGKL…RLAGILEERI (78 aa). At Ser569 the chain carries O-(pantetheine 4'-phosphoryl)serine. The tract at residues 655–897 is short-chain dehydrogenase/reductase (R) domain; it reads LTGATGFVGS…FVPVDYVNAV (243 aa).

The protein belongs to the NRP synthetase family.

It carries out the reaction L-tyrosinal + AMP + diphosphate + NADP(+) = L-tyrosine + ATP + NADPH + H(+). It participates in secondary metabolite biosynthesis. In terms of biological role, non-canonical nonribosomal peptide synthetase; part of the lna gene cluster that mediates the biosynthesis of diastereomeric piperazines. Lna and lnb clusters encode sets of enzymes that produce overlapping sets of previously undescribed metabolites such as piperazinomycin-like metabolites or morpholine. The lna and lnb biosynthetic pathways appear to be part of a signaling network that controls the formation of sclerotia, a resilient overwintering structure. One primary function of the non-canonical nonribosomal peptide synthetases lnaA and lnbA consists in the reduction of L-tyrosine. The presence in the clusters of tailoring enzymes such as the oxidoreductases lnaB, lnbB, lnaE or lnbE, as well as of the cytochrome P450 monooxygenases lnaC, lnaD, or lnbC, might explain formation of various diastereomeric piperazines. The chain is Aldehyde reductase lnaA from Aspergillus flavus (strain ATCC 200026 / FGSC A1120 / IAM 13836 / NRRL 3357 / JCM 12722 / SRRC 167).